The primary structure comprises 179 residues: Protein Syd (179 aa).

Belongs to the Syd family.

The protein localises to the cell inner membrane. In terms of biological role, interacts with the SecY protein in vivo. May bind preferentially to an uncomplexed state of SecY, thus functioning either as a chelating agent for excess SecY in the cell or as a regulatory factor that negatively controls the translocase function. This is Protein Syd from Pseudoalteromonas translucida (strain TAC 125).